The following is a 54-amino-acid chain: MAKTNRIKIKLISSSGSKHFYTTTKNKKNQINKLSLKKYDPIIKKHVIYQEKKI.

It belongs to the bacterial ribosomal protein bL33 family.

This chain is Large ribosomal subunit protein bL33, found in Buchnera aphidicola subsp. Cinara cedri (strain Cc).